We begin with the raw amino-acid sequence, 188 residues long: Peptidyl-prolyl cis-trans isomerase H (188 aa).

Residue Ala2 is modified to N-acetylalanine. A PPIase cyclophilin-type domain is found at 14–176; it reads FFDVSIGGQE…WTHSLTCPAL (163 aa).

This sequence belongs to the cyclophilin-type PPIase family. PPIase H subfamily. Interacts directly with PRPF4. Part of a heteromeric complex containing PPIH, PRPF3 and PRPF4 that is stable in the absence of RNA. Component of the U4/U6-U5 tri-snRNP complex composed of the U4, U6 and U5 snRNAs and at least PRPF3, PRPF4, PRPF6, PRPF8, PRPF31, SNRNP200, TXNL4A, SNRNP40, DDX23, CD2BP2, PPIH, SNU13, EFTUD2, SART1 and USP39. Heterodimer with PRPF18. Heterodimer with PRPF18.

It localises to the nucleus speckle. The protein resides in the cytoplasm. The enzyme catalyses [protein]-peptidylproline (omega=180) = [protein]-peptidylproline (omega=0). Inhibited by cyclosporin A. Its function is as follows. PPIase that catalyzes the cis-trans isomerization of proline imidic peptide bonds in oligopeptides and may therefore assist protein folding. Participates in pre-mRNA splicing. May play a role in the assembly of the U4/U5/U6 tri-snRNP complex, one of the building blocks of the spliceosome. May act as a chaperone. This Mus musculus (Mouse) protein is Peptidyl-prolyl cis-trans isomerase H (Ppih).